We begin with the raw amino-acid sequence, 405 residues long: MSDVTVANYHAFPDARGHFGRYGGRFVAETLIGPLQELAQAYDAARHDPDFIAAYNKDLKDYVGRPSPIYHAERLSRKVGGAQILLKREDLNHTGAHKINNTIGQALLAARMGKTRIIAETGAGQHGVASATVAARLGLECVVYMGATDIERQQINVYRMKLLGATVVPVTSGSATLKDALNEAMRDWVTHVGHTFYIIGTVAGPDPYPRMVRDFNAIVGREARAQMIEDYGRLPDAMTACVGGGSNAIGLFHAFLNDASVRIYGAEAAGDGIATGRHAASIVAGRPGVLHGNRTYVVCDDDGQILETHSVSAGLDYPGVGPEHAFLADSGRVQYVGIRDEEALAAFHLLAHTEGILAALESSHAVAHAMTLARDLPKDALVLCNLSGRGDKDVHTIAAREGVRV.

K98 is subject to N6-(pyridoxal phosphate)lysine.

This sequence belongs to the TrpB family. Tetramer of two alpha and two beta chains. The cofactor is pyridoxal 5'-phosphate.

It catalyses the reaction (1S,2R)-1-C-(indol-3-yl)glycerol 3-phosphate + L-serine = D-glyceraldehyde 3-phosphate + L-tryptophan + H2O. Its pathway is amino-acid biosynthesis; L-tryptophan biosynthesis; L-tryptophan from chorismate: step 5/5. In terms of biological role, the beta subunit is responsible for the synthesis of L-tryptophan from indole and L-serine. The sequence is that of Tryptophan synthase beta chain (trpB) from Xylella fastidiosa (strain 9a5c).